Reading from the N-terminus, the 417-residue chain is Signal recognition particle receptor FtsY (417 aa).

GTP is bound by residues 228 to 235, 310 to 314, and 368 to 371; these read GINGTGKT, DTAGR, and TKID.

The protein belongs to the GTP-binding SRP family. FtsY subfamily. In terms of assembly, part of the signal recognition particle protein translocation system, which is composed of SRP and FtsY.

The protein localises to the cell membrane. Its subcellular location is the cytoplasm. It catalyses the reaction GTP + H2O = GDP + phosphate + H(+). Functionally, involved in targeting and insertion of nascent membrane proteins into the cytoplasmic membrane. Acts as a receptor for the complex formed by the signal recognition particle (SRP) and the ribosome-nascent chain (RNC). The chain is Signal recognition particle receptor FtsY from Methanosarcina acetivorans (strain ATCC 35395 / DSM 2834 / JCM 12185 / C2A).